A 235-amino-acid polypeptide reads, in one-letter code: MFFIHKLFPAKLIRRYKRFLADVKREDQHIFTVSVPNTGSMLGLTTPNSNIWLSYHNNPKRRYAYQLEIVEANNTLVGINTTLPNKLALEAIQNNLLPELNGYKTILKEQRYGIQSRIDFLLRDDILPDCYLEIKNVHFIRQKGLAEFPDTETKRGTRHLEELIKIVQQGKRAVMLYIIQREDCSAFTICRDLDPTYGRKFDLALESGVEFYAIKCQVSVEGIFPIQQVKIENRK.

Belongs to the SfsA family.

This is Sugar fermentation stimulation protein homolog from Bartonella henselae (strain ATCC 49882 / DSM 28221 / CCUG 30454 / Houston 1) (Rochalimaea henselae).